A 152-amino-acid polypeptide reads, in one-letter code: uncharacterized protein (152 aa).

The first 23 residues, 1 to 23, serve as a signal peptide directing secretion; that stretch reads MYSILIACLVLLLCLVIYVGHRA.

This sequence belongs to the asfivirus EP152R family.

It localises to the virion. This is an uncharacterized protein from Ornithodoros (relapsing fever ticks).